The sequence spans 524 residues: BEL1-like homeodomain protein 3 (524 aa).

The segment at 171–187 (SRYLKPTQQLLDEVVSV) is SR/KY domain. 2 stretches are compositionally biased toward basic and acidic residues: residues 195–205 (NKKMKNDKGQD) and 216–235 (EDDK…ELQS). The segment at 195-236 (NKKMKNDKGQDFHNGSSDNITEDDKSQSQELSPSERQELQSK) is disordered. Residues 229–300 (ERQELQSKKS…CLRDAIKEQI (72 aa)) are BELL domain. Positions 346–408 (AWRPQRGLPE…NARVRLWKPM (63 aa)) form a DNA-binding region, homeobox. The disordered stretch occupies residues 429 to 463 (QDTKKMQETSQLKHEDSSSSQQQNQGNNNNNIPYT). The segment covering 430-445 (DTKKMQETSQLKHEDS) has biased composition (basic and acidic residues). A compositionally biased stretch (low complexity) spans 446 to 459 (SSSQQQNQGNNNNN).

This sequence belongs to the TALE/BELL homeobox family. May form heterodimeric complex with the TALE/KNOX protein STM. Interacts with OFP1, OFP2, OFP3, OFP4, OFP5 and OFP15.

Its subcellular location is the nucleus. Functionally, transcription factor that is responsive of the nuclear import of SHOOT MERISTEMLESS (STM). In Arabidopsis thaliana (Mouse-ear cress), this protein is BEL1-like homeodomain protein 3 (BLH3).